We begin with the raw amino-acid sequence, 303 residues long: MNKEQTLAHNSSRVTFKELQQIIKMGLVQGNLIPAFAGSWLAIVLANHSFLSSIPQILMMLVGSTLIMGGACALNNYYDQDIDSIMPSKQQRPTVNERISNRNLLILSFGMMLIGEALLFALNIPSGVIGLLGIVGYVSFYSIWSKRHTVWNTVIGSFPGAVPPLIGWTAIEGNISLVAVALFLVIFCWQPIHFYALAIKRKDEYSLANIPMLPSVKGFNRTRVSMFFWLVVLLPLPFLLSSLGVTFIVLATLLNLGWLYLGLTSFKKDTDQTKWATKMFIYSLNYLVVFFVLVVVISLIQMF.

7 consecutive transmembrane segments (helical) span residues 25–45 (MGLV…AIVL), 54–74 (IPQI…ACAL), 118–138 (LLFA…VGYV), 151–171 (WNTV…WTAI), 177–197 (LVAV…FYAL), 230–250 (LVVL…FIVL), and 280–300 (FIYS…ISLI).

It belongs to the UbiA prenyltransferase family. Protoheme IX farnesyltransferase subfamily. Interacts with CtaA.

The protein localises to the cell membrane. The catalysed reaction is heme b + (2E,6E)-farnesyl diphosphate + H2O = Fe(II)-heme o + diphosphate. It participates in porphyrin-containing compound metabolism; heme O biosynthesis; heme O from protoheme: step 1/1. In terms of biological role, converts heme B (protoheme IX) to heme O by substitution of the vinyl group on carbon 2 of heme B porphyrin ring with a hydroxyethyl farnesyl side group. The chain is Protoheme IX farnesyltransferase from Staphylococcus saprophyticus subsp. saprophyticus (strain ATCC 15305 / DSM 20229 / NCIMB 8711 / NCTC 7292 / S-41).